The primary structure comprises 659 residues: Protein real-time (659 aa).

The PRELI/MSF1 domain maps to 3-175 (QKFQSPVRVY…FIGQLREEGI (173 aa)). The CRAL-TRIO domain maps to 286–462 (KPAVVVEHFP…FLGGPCKTMI (177 aa)). Serine 477 bears the Phosphoserine mark. One can recognise a GOLD domain in the interval 512–631 (HRNLYKSVDL…QLNVFYEVLS (120 aa)).

As to expression, restricted to the developing gut and central nervous system (CNS).

It is found in the mitochondrion. The protein is Protein real-time (retm) of Drosophila melanogaster (Fruit fly).